Here is a 720-residue protein sequence, read N- to C-terminus: Putative glutamine--fructose-6-phosphate aminotransferase [isomerizing] (720 aa).

Cysteine 2 functions as the Nucleophile; for GATase activity in the catalytic mechanism. The Glutamine amidotransferase type-2 domain occupies 2–321 (CGIFGYCNFL…DNDIAHIYDG (320 aa)). Residues 266–280 (STTSTFNHGSSTETP) show a composition bias toward polar residues. The interval 266-285 (STTSTFNHGSSTETPAENGL) is disordered. SIS domains lie at 393–532 (WLTE…DLVS) and 565–710 (CDKK…VDLP).

It catalyses the reaction D-fructose 6-phosphate + L-glutamine = D-glucosamine 6-phosphate + L-glutamate. Its pathway is nucleotide-sugar biosynthesis; UDP-N-acetyl-alpha-D-glucosamine biosynthesis; alpha-D-glucosamine 6-phosphate from D-fructose 6-phosphate: step 1/1. Its function is as follows. Involved in amino sugar synthesis (formation of chitin, supplies the amino sugars of asparagine-linked oligosaccharides of glycoproteins). The chain is Putative glutamine--fructose-6-phosphate aminotransferase [isomerizing] from Saccharomyces cerevisiae (strain RM11-1a) (Baker's yeast).